The following is a 448-amino-acid chain: Putative sodium-coupled neutral amino acid transporter 11 (448 aa).

Residues methionine 1–serine 20 form a disordered region. 11 helical membrane-spanning segments follow: residues valine 22–proline 42, methionine 52–valine 72, isoleucine 94–tyrosine 114, phenylalanine 143–alanine 163, leucine 165–valine 185, alanine 200–isoleucine 220, isoleucine 246–phenylalanine 266, threonine 286–valine 306, serine 324–tyrosine 344, cysteine 346–phenylalanine 366, and methionine 389–proline 409. 3 N-linked (GlcNAc...) asparagine glycosylation sites follow: asparagine 425, asparagine 440, and asparagine 444.

Belongs to the amino acid/polyamine transporter 2 family.

The protein resides in the membrane. Its function is as follows. Putative sodium-dependent amino acid/proton antiporter. This chain is Putative sodium-coupled neutral amino acid transporter 11 (slc38a11), found in Danio rerio (Zebrafish).